A 511-amino-acid chain; its full sequence is UDP-N-acetylmuramoyl-L-alanyl-D-glutamate--2,6-diaminopimelate ligase (511 aa).

Serine 30 is a UDP-N-acetyl-alpha-D-muramoyl-L-alanyl-D-glutamate binding site. Glycine 110–threonine 116 provides a ligand contact to ATP. UDP-N-acetyl-alpha-D-muramoyl-L-alanyl-D-glutamate-binding positions include threonine 152–threonine 153, serine 179, glutamine 185, and arginine 187. Lysine 219 carries the N6-carboxylysine modification. Residues arginine 385, aspartate 409–arginine 412, glycine 476, and glutamate 480 each bind meso-2,6-diaminopimelate. Positions aspartate 409–arginine 412 match the Meso-diaminopimelate recognition motif motif.

Belongs to the MurCDEF family. MurE subfamily. The cofactor is Mg(2+). In terms of processing, carboxylation is probably crucial for Mg(2+) binding and, consequently, for the gamma-phosphate positioning of ATP.

It is found in the cytoplasm. The enzyme catalyses UDP-N-acetyl-alpha-D-muramoyl-L-alanyl-D-glutamate + meso-2,6-diaminopimelate + ATP = UDP-N-acetyl-alpha-D-muramoyl-L-alanyl-gamma-D-glutamyl-meso-2,6-diaminopimelate + ADP + phosphate + H(+). Its pathway is cell wall biogenesis; peptidoglycan biosynthesis. Its function is as follows. Catalyzes the addition of meso-diaminopimelic acid to the nucleotide precursor UDP-N-acetylmuramoyl-L-alanyl-D-glutamate (UMAG) in the biosynthesis of bacterial cell-wall peptidoglycan. This Geobacter metallireducens (strain ATCC 53774 / DSM 7210 / GS-15) protein is UDP-N-acetylmuramoyl-L-alanyl-D-glutamate--2,6-diaminopimelate ligase.